A 294-amino-acid chain; its full sequence is Protoheme IX farnesyltransferase (294 aa).

A run of 9 helical transmembrane segments spans residues leucine 8–alanine 28, tyrosine 35–leucine 55, isoleucine 81–leucine 101, valine 107–tryptophan 127, isoleucine 133–alanine 153, leucine 163–leucine 183, methionine 209–methionine 226, serine 230–tyrosine 252, and phenylalanine 266–leucine 286.

This sequence belongs to the UbiA prenyltransferase family. Protoheme IX farnesyltransferase subfamily.

The protein resides in the cell inner membrane. The enzyme catalyses heme b + (2E,6E)-farnesyl diphosphate + H2O = Fe(II)-heme o + diphosphate. It functions in the pathway porphyrin-containing compound metabolism; heme O biosynthesis; heme O from protoheme: step 1/1. In terms of biological role, converts heme B (protoheme IX) to heme O by substitution of the vinyl group on carbon 2 of heme B porphyrin ring with a hydroxyethyl farnesyl side group. This chain is Protoheme IX farnesyltransferase, found in Blochmanniella pennsylvanica (strain BPEN).